The following is a 48-amino-acid chain: DNA-directed RNA polymerase subunit Rpo12 (48 aa).

Zn(2+) contacts are provided by Cys-9, Cys-26, and Cys-29.

This sequence belongs to the archaeal Rpo12/eukaryotic RPC10 RNA polymerase subunit family. In terms of assembly, part of the RNA polymerase complex. The cofactor is Zn(2+).

It is found in the cytoplasm. It catalyses the reaction RNA(n) + a ribonucleoside 5'-triphosphate = RNA(n+1) + diphosphate. In terms of biological role, DNA-dependent RNA polymerase (RNAP) catalyzes the transcription of DNA into RNA using the four ribonucleoside triphosphates as substrates. In Saccharolobus islandicus (strain Y.N.15.51 / Yellowstone #2) (Sulfolobus islandicus), this protein is DNA-directed RNA polymerase subunit Rpo12.